We begin with the raw amino-acid sequence, 179 residues long: Sec-independent protein translocase protein TatB (179 aa).

A helical membrane pass occupies residues 1–21 (MFDLGFWEVLIIMLIGLLILG). Composition is skewed to basic and acidic residues over residues 75-86 (KDVEKNARRFEA) and 94-106 (TFRDVGRQADDAA). Residues 75 to 179 (KDVEKNARRF…QGGGGEEKRQ (105 aa)) are disordered.

The protein belongs to the TatB family. In terms of assembly, the Tat system comprises two distinct complexes: a TatABC complex, containing multiple copies of TatA, TatB and TatC subunits, and a separate TatA complex, containing only TatA subunits. Substrates initially bind to the TatABC complex, which probably triggers association of the separate TatA complex to form the active translocon.

Its subcellular location is the cell inner membrane. Functionally, part of the twin-arginine translocation (Tat) system that transports large folded proteins containing a characteristic twin-arginine motif in their signal peptide across membranes. Together with TatC, TatB is part of a receptor directly interacting with Tat signal peptides. TatB may form an oligomeric binding site that transiently accommodates folded Tat precursor proteins before their translocation. The protein is Sec-independent protein translocase protein TatB of Alkalilimnicola ehrlichii (strain ATCC BAA-1101 / DSM 17681 / MLHE-1).